A 671-amino-acid polypeptide reads, in one-letter code: DNA ligase (671 aa).

NAD(+) is bound by residues aspartate 32–aspartate 36, serine 81–leucine 82, and glutamate 113. The active-site N6-AMP-lysine intermediate is lysine 115. Residues arginine 136, glutamate 173, lysine 290, and lysine 314 each contribute to the NAD(+) site. Positions 408, 411, 426, and 432 each coordinate Zn(2+). One can recognise a BRCT domain in the interval glutamate 593–serine 671.

It belongs to the NAD-dependent DNA ligase family. LigA subfamily. Requires Mg(2+) as cofactor. The cofactor is Mn(2+).

It catalyses the reaction NAD(+) + (deoxyribonucleotide)n-3'-hydroxyl + 5'-phospho-(deoxyribonucleotide)m = (deoxyribonucleotide)n+m + AMP + beta-nicotinamide D-nucleotide.. DNA ligase that catalyzes the formation of phosphodiester linkages between 5'-phosphoryl and 3'-hydroxyl groups in double-stranded DNA using NAD as a coenzyme and as the energy source for the reaction. It is essential for DNA replication and repair of damaged DNA. The polypeptide is DNA ligase (Shigella dysenteriae serotype 1 (strain Sd197)).